The primary structure comprises 314 residues: Beta-lactamase 2 (314 aa).

Residues 1-26 form the signal peptide; that stretch reads MLHTRIRRATLGAVAALSLVPVMACG. The segment covering 32-47 has biased composition (low complexity); it reads DAAEPAGSAPSSSAAA. The interval 32-51 is disordered; sequence DAAEPAGSAPSSSAAAHKPG. S96 serves as the catalytic Acyl-ester intermediate. Residue 258–260 coordinates substrate; that stretch reads KTG.

The protein belongs to the class-A beta-lactamase family.

The catalysed reaction is a beta-lactam + H2O = a substituted beta-amino acid. The sequence is that of Beta-lactamase 2 (blaU) from Streptomyces cacaoi.